The following is a 494-amino-acid chain: MQKKYVVALDQGTTSSRAIVFDHDANIVSVSQREFTQLYPNPGWVEHDPMEIWASQSSVLIESLARAGIHSDEVAAIGITNQRETTIIWEKATGKPVYNAIVWQCRRSSEICEQLKAQGLEDYVRENTGLLLDPYFSGTKIKWILDNVPDARAKAKRGELLFGTVDTWLLWKLTEGKVHVTDPTNAARTLLFNIHSLSWDTTLLEALDIPAAMLPEVRPSCSVYGTTRIAGEGSEIPLAGIAGDQQAALFGQLCVEPGMAKNTYGTGCFLLMNTGNKAVRSSHGLLTTVAVGAQGEVNYALEGSVFMGGATIQWLRDELGLIRDASDTEYFASKVADTNGVYLVPAFVGLGAPYWDPNARGALFGLTRGANRNHIIRAALESIAYQSKDLLDAMIKDSGERLKSLKVDGGAVANDFLMQFQADITDVEVLRPSVCETTALGAAFLAGLAVGFWTSVTELEYKACIDKHFKPNIDASQRERLYVDWQDAVARTRS.

Threonine 13 serves as a coordination point for ADP. Threonine 13, threonine 14, and serine 15 together coordinate ATP. A sn-glycerol 3-phosphate-binding site is contributed by threonine 13. Arginine 17 contributes to the ADP binding site. Sn-glycerol 3-phosphate-binding residues include arginine 83, glutamate 84, tyrosine 135, and aspartate 244. Positions 83, 84, 135, 244, and 245 each coordinate glycerol. 2 residues coordinate ADP: threonine 266 and glycine 309. Threonine 266, glycine 309, glutamine 313, and glycine 410 together coordinate ATP. 2 residues coordinate ADP: glycine 410 and asparagine 414.

The protein belongs to the FGGY kinase family.

It carries out the reaction glycerol + ATP = sn-glycerol 3-phosphate + ADP + H(+). It functions in the pathway polyol metabolism; glycerol degradation via glycerol kinase pathway; sn-glycerol 3-phosphate from glycerol: step 1/1. Inhibited by fructose 1,6-bisphosphate (FBP). Key enzyme in the regulation of glycerol uptake and metabolism. Catalyzes the phosphorylation of glycerol to yield sn-glycerol 3-phosphate. The sequence is that of Glycerol kinase from Shewanella sp. (strain MR-7).